We begin with the raw amino-acid sequence, 126 residues long: Iron-sulfur cluster insertion protein ErpA (126 aa).

The interval 1–21 is disordered; the sequence is MNQPANQFNPSSSQPVDPTVL. Iron-sulfur cluster contacts are provided by cysteine 54, cysteine 118, and cysteine 120.

It belongs to the HesB/IscA family. In terms of assembly, homodimer. Requires iron-sulfur cluster as cofactor.

Required for insertion of 4Fe-4S clusters for at least IspG. The polypeptide is Iron-sulfur cluster insertion protein ErpA (Psychrobacter arcticus (strain DSM 17307 / VKM B-2377 / 273-4)).